The chain runs to 282 residues: PAK4-inhibitor INKA1 (282 aa).

Disordered stretches follow at residues 21-50 and 92-127; these read RDTGSPPMSGPLQPKPRTDQNVQPKRQFRA and GFSEVSGSTWREEEPSVPQRQAPRERPPHSQRFSVS. Inka box regions lie at residues 163–200 and 256–282; these read EAEDWTAALLNRGRSRQPLVLGDNCFADLVHNWMELPE and PADISRFAALMNCRSRQPIIYNDVSYL.

It belongs to the INKA family. As to quaternary structure, interacts with PAK4. As to expression, expressed in tissues of the developing head during neurulation.

Its subcellular location is the nucleus. It localises to the cytoplasm. Functionally, inhibitor of the serine/threonine-protein kinase PAK4. Acts by binding PAK4 in a substrate-like manner, inhibiting the protein kinase activity. The sequence is that of PAK4-inhibitor INKA1 from Mus musculus (Mouse).